The following is a 335-amino-acid chain: MSWFTPEVIDVIIQVVKAIVVLLAVVVCGALLSFVERRLLGWWQDRYGPNRVGPFGMFQIAADMLKMFFKEDWNPPFVDKMIFTLAPVVAMSALLIGFSIIPITPGWGVADLNIGLLFFFAMAGLSVYAVLFAGWSSNNKYALLGSLRASAQTVSYEVFLGLALMGVVVQVGSFNMRDIVEYQAQNLWFIIPQFFGFCTFFIAGVAVTHRHPFDQPEAEQELADGYHIEYAGMKWGMFFVGEYIGIILISALLVTLFFGGWHGPFGILPQVPFLWFALKTAFFIMLFILLRASIPRPRYDQVMDFSWKFCLPLTLINLLVTAAIVLYNTPAVAAQ.

The next 8 membrane-spanning stretches (helical) occupy residues 15–35, 81–101, 114–134, 154–174, 187–207, 238–258, 270–290, and 307–327; these read VVKA…LSFV, MIFT…FSII, IGLL…LFAG, VSYE…VGSF, LWFI…GVAV, FFVG…TLFF, QVPF…FILL, and WKFC…IVLY.

It belongs to the complex I subunit 1 family. As to quaternary structure, NDH-1 is composed of 13 different subunits. Subunits NuoA, H, J, K, L, M, N constitute the membrane sector of the complex.

The protein localises to the cell inner membrane. The catalysed reaction is a quinone + NADH + 5 H(+)(in) = a quinol + NAD(+) + 4 H(+)(out). Its function is as follows. NDH-1 shuttles electrons from NADH, via FMN and iron-sulfur (Fe-S) centers, to quinones in the respiratory chain. The immediate electron acceptor for the enzyme in this species is believed to be ubiquinone. Couples the redox reaction to proton translocation (for every two electrons transferred, four hydrogen ions are translocated across the cytoplasmic membrane), and thus conserves the redox energy in a proton gradient. This subunit may bind ubiquinone. The chain is NADH-quinone oxidoreductase subunit H from Pseudomonas putida (strain GB-1).